The following is a 359-amino-acid chain: UDP-N-acetylglucosamine--N-acetylmuramyl-(pentapeptide) pyrophosphoryl-undecaprenol N-acetylglucosamine transferase (359 aa).

UDP-N-acetyl-alpha-D-glucosamine-binding positions include 15–17 (TGG), N127, R166, S191, I245, 264–269 (ALTVSE), and Q290.

The protein belongs to the glycosyltransferase 28 family. MurG subfamily.

The protein localises to the cell inner membrane. It catalyses the reaction di-trans,octa-cis-undecaprenyl diphospho-N-acetyl-alpha-D-muramoyl-L-alanyl-D-glutamyl-meso-2,6-diaminopimeloyl-D-alanyl-D-alanine + UDP-N-acetyl-alpha-D-glucosamine = di-trans,octa-cis-undecaprenyl diphospho-[N-acetyl-alpha-D-glucosaminyl-(1-&gt;4)]-N-acetyl-alpha-D-muramoyl-L-alanyl-D-glutamyl-meso-2,6-diaminopimeloyl-D-alanyl-D-alanine + UDP + H(+). It functions in the pathway cell wall biogenesis; peptidoglycan biosynthesis. Cell wall formation. Catalyzes the transfer of a GlcNAc subunit on undecaprenyl-pyrophosphoryl-MurNAc-pentapeptide (lipid intermediate I) to form undecaprenyl-pyrophosphoryl-MurNAc-(pentapeptide)GlcNAc (lipid intermediate II). This chain is UDP-N-acetylglucosamine--N-acetylmuramyl-(pentapeptide) pyrophosphoryl-undecaprenol N-acetylglucosamine transferase, found in Pseudomonas entomophila (strain L48).